Reading from the N-terminus, the 45-residue chain is Photosystem II reaction center protein K (45 aa).

A propeptide spanning residues 1–8 (MELAMLLA) is cleaved from the precursor. The chain crosses the membrane as a helical span at residues 24–44 (LPVIPVFFLLLAFVWQAAVGF).

Belongs to the PsbK family. In terms of assembly, PSII is composed of 1 copy each of membrane proteins PsbA, PsbB, PsbC, PsbD, PsbE, PsbF, PsbH, PsbI, PsbJ, PsbK, PsbL, PsbM, PsbT, PsbX, PsbY, PsbZ, Psb30/Ycf12, peripheral proteins PsbO, CyanoQ (PsbQ), PsbU, PsbV and a large number of cofactors. It forms dimeric complexes.

It is found in the cellular thylakoid membrane. One of the components of the core complex of photosystem II (PSII). PSII is a light-driven water:plastoquinone oxidoreductase that uses light energy to abstract electrons from H(2)O, generating O(2) and a proton gradient subsequently used for ATP formation. It consists of a core antenna complex that captures photons, and an electron transfer chain that converts photonic excitation into a charge separation. In Trichodesmium erythraeum (strain IMS101), this protein is Photosystem II reaction center protein K.